The primary structure comprises 366 residues: Putative ankyrin repeat protein RBE_0601 (366 aa).

ANK repeat units lie at residues 39–68 (KHGTALNRAIKLKDEKIITELLAKKVDINE), 94–124 (LPDEYLYKAVHQGRLDLVQYFIEEKNFDVNT), 131–160 (HGGAILSIATMGEHIDVINYLLKNGAIASQ), 162–186 (VISAILKGNIEILEKLFEYGATAHD), 210–239 (KSSNSETKEDLSNYVETLKFLLEHGGNPNA), and 250–280 (IALSALMDEPKNDTYKDICKLLIQYGADTSK).

This chain is Putative ankyrin repeat protein RBE_0601, found in Rickettsia bellii (strain RML369-C).